Consider the following 236-residue polypeptide: Small ribosomal subunit protein uS2c (236 aa).

It belongs to the universal ribosomal protein uS2 family.

Its subcellular location is the plastid. The protein localises to the chloroplast. The polypeptide is Small ribosomal subunit protein uS2c (rps2) (Cucumis sativus (Cucumber)).